A 147-amino-acid polypeptide reads, in one-letter code: Hemoglobin subunit beta (147 aa).

V2 carries the post-translational modification N-acetylvaline. The Globin domain occupies 3–147; it reads HLTGEEKAAV…VANALAHKYH (145 aa). The residue at position 13 (T13) is a Phosphothreonine. The residue at position 45 (S45) is a Phosphoserine. Position 60 is an N6-acetyllysine (K60). Residue H64 coordinates heme b. K83 carries the N6-acetyllysine modification. H93 provides a ligand contact to heme b. C94 carries the post-translational modification S-nitrosocysteine. Position 145 is an N6-acetyllysine (K145).

It belongs to the globin family. In terms of assembly, heterotetramer of two alpha chains and two beta chains. As to expression, red blood cells.

In terms of biological role, involved in oxygen transport from the lung to the various peripheral tissues. This chain is Hemoglobin subunit beta (HBB), found in Ailuropoda melanoleuca (Giant panda).